A 214-amino-acid polypeptide reads, in one-letter code: MTLQPTFEGRTPEQCLNVHTDSHPDITGCQAALFEWAESYDSKDWDRLKQCIAPFLRIDYRAFLDKLWEKMPAEEFVAMVSHPHFLGNPLLKTQHFVGTMKWEKVDDSKIVGYHQMRVAHQKHLDSQMKEVVAKGHGHGSATVTYRKINGEWKFAGIEPNIRWTEFGGEGIFGPPEKEENGVAADDQVMNSNGSSEVEERNGHVVNKAVEVRSV.

Y40 and Y60 together coordinate substrate. Catalysis depends on residues H95 and H120.

Belongs to the scytalone dehydratase family.

It functions in the pathway secondary metabolite biosynthesis. Scytalone dehydratase-like protein; part of the gene cluster that mediates the biosynthesis of monodictyphenone, a prenyl xanthone derivative. The pathway begins with the synthesis of atrochrysone thioester by the polyketide synthase (PKS) mdpG. The atrochrysone carboxyl ACP thioesterase mdpF then breaks the thioester bond and releases the atrochrysone carboxylic acid from mdpG. The atrochrysone carboxylic acid is then converted to atrochrysone which is further transformed into emodin anthrone. The next step is performed by the anthrone oxygenase mdpH that catalyzes the oxidation of emodinanthrone to emodin. Emodin is further modified to yield monodictyphenone via several steps involving mdpB, mdpC mdpJ, mdpK and mdpL. These enzymes with xptA, xptB and xptC are also proposed to be involved in the synthesis of shamixanthone from emodin. Especially, direct reduction of emodin by the short chain dehydrogenase mdpC followed by dehydration catalyzed by the scytalone dehydratase-like protein mdpB gives loss of oxygen and formation of chrysophanol intermediate in two simple steps. The chain is Scytalone dehydratase-like protein mdpB from Emericella nidulans (strain FGSC A4 / ATCC 38163 / CBS 112.46 / NRRL 194 / M139) (Aspergillus nidulans).